The primary structure comprises 526 residues: tRNA (guanine(26)-N(2))-dimethyltransferase (526 aa).

Residues 1-10 (MTENVNSSGD) are compositionally biased toward polar residues. The tract at residues 1 to 20 (MTENVNSSGDSAIKSEDKEE) is disordered. In terms of domain architecture, Trm1 methyltransferase spans 22–441 (TVIQEGQAKV…APMHLLWDIY (420 aa)). Arg47, Arg104, and Asp122 together coordinate S-adenosyl-L-methionine. Zn(2+)-binding residues include Cys286, Cys289, Cys325, and Cys328. A disordered region spans residues 498 to 526 (KGKNWGPRQKAKGSVNSTKAGFQLTEHKE).

This sequence belongs to the class I-like SAM-binding methyltransferase superfamily. Trm1 family.

The catalysed reaction is guanosine(26) in tRNA + 2 S-adenosyl-L-methionine = N(2)-dimethylguanosine(26) in tRNA + 2 S-adenosyl-L-homocysteine + 2 H(+). Functionally, dimethylates a single guanine residue at position 26 of most tRNAs using S-adenosyl-L-methionine as donor of the methyl groups. The sequence is that of tRNA (guanine(26)-N(2))-dimethyltransferase (trm-1) from Caenorhabditis elegans.